The primary structure comprises 644 residues: Exoribonuclease 2 (644 aa).

The RNB domain occupies 189–516; that stretch reads REDLTALDFV…NHRLLKAVIK (328 aa). The region spanning 561-643 is the S1 motif domain; the sequence is DTRFAAEIVD…ETRSIIARPV (83 aa).

It belongs to the RNR ribonuclease family. RNase II subfamily.

The protein resides in the cytoplasm. It carries out the reaction Exonucleolytic cleavage in the 3'- to 5'-direction to yield nucleoside 5'-phosphates.. Functionally, involved in mRNA degradation. Hydrolyzes single-stranded polyribonucleotides processively in the 3' to 5' direction. The sequence is that of Exoribonuclease 2 from Escherichia coli (strain ATCC 8739 / DSM 1576 / NBRC 3972 / NCIMB 8545 / WDCM 00012 / Crooks).